A 345-amino-acid polypeptide reads, in one-letter code: Cytoskeleton protein RodZ (345 aa).

At 1–111 the chain is on the cytoplasmic side; the sequence is MNTEASQDQT…LGKKHKKRDG (111 aa). Positions 19-79 constitute an HTH cro/C1-type domain; it reads LRQARESLGL…KLVHLPEDEL (61 aa). The segment at residues 30–49 is a DNA-binding region (H-T-H motif); that stretch reads QQTVAERLCLKVSTIRDIEE. The helical; Signal-anchor for type II membrane protein transmembrane segment at 112-132 threads the bilayer; that stretch reads WLMSFTWLIVLVVLGLTGAWW. Residues 133–345 lie on the Periplasmic side of the membrane; sequence WQNHQAQQAE…RVARLTVGVE (213 aa). Positions 151–260 are disordered; the sequence is SAQLSQNGGQ…LPTADAGVSG (110 aa). Positions 188–225 are enriched in polar residues; that stretch reads PLTNHSGSAITNSATTSSVPKTTSTEPVDTANTNTTMH. Residues 229–241 are compositionally biased toward low complexity; the sequence is AASAAVSPSQVPQ.

Belongs to the RodZ family.

Its subcellular location is the cell inner membrane. Its function is as follows. Cytoskeletal protein that is involved in cell-shape control through regulation of the length of the long axis. The sequence is that of Cytoskeleton protein RodZ from Yersinia pestis (strain Pestoides F).